The following is a 138-amino-acid chain: Transcription antitermination protein NusB (138 aa).

The protein belongs to the NusB family.

Involved in transcription antitermination. Required for transcription of ribosomal RNA (rRNA) genes. Binds specifically to the boxA antiterminator sequence of the ribosomal RNA (rrn) operons. The sequence is that of Transcription antitermination protein NusB from Helicobacter pylori (strain P12).